The chain runs to 597 residues: Golgin subfamily A member 8C (597 aa).

2 disordered regions span residues 1–80 (MAEE…VPDS) and 96–120 (KQQK…QKAE). The span at 38 to 50 (TNGSIHETATSGG) shows a compositional bias: polar residues. The segment covering 53–70 (SPGDSSSTSSSLHAPQSP) has biased composition (low complexity). Coiled-coil stretches lie at residues 81-141 (RSVK…NTDL), 199-255 (EWKL…SQEV), and 296-394 (SEVE…GKRL). A compositionally biased stretch (basic and acidic residues) spans 100 to 120 (KQVEHQLEEEKKANNEKQKAE). Disordered regions lie at residues 390 to 422 (LGKR…SGFM), 457 to 498 (PITK…GVAA), and 549 to 576 (PVQG…QEHP). A compositionally biased stretch (gly residues) spans 470–483 (PGGGHHQAGPGQGG). Residues 553–563 (ETREGSPHDKP) show a composition bias toward basic and acidic residues.

Belongs to the GOLGA8 family.

This chain is Golgin subfamily A member 8C (GOLGA8CP), found in Homo sapiens (Human).